A 1131-amino-acid chain; its full sequence is DNA-directed RNA polymerase subunit beta (1131 aa).

The disordered stretch occupies residues 1108–1131 (QLARRTPPRPTYESLSRESLDDDE). Over residues 1122–1131 (LSRESLDDDE) the composition is skewed to basic and acidic residues.

Belongs to the RNA polymerase beta chain family. In cyanobacteria the RNAP catalytic core is composed of 2 alpha, 1 beta, 1 beta', 1 gamma and 1 omega subunit. When a sigma factor is associated with the core the holoenzyme is formed, which can initiate transcription.

The enzyme catalyses RNA(n) + a ribonucleoside 5'-triphosphate = RNA(n+1) + diphosphate. Functionally, DNA-dependent RNA polymerase catalyzes the transcription of DNA into RNA using the four ribonucleoside triphosphates as substrates. This chain is DNA-directed RNA polymerase subunit beta, found in Nostoc sp. (strain PCC 7120 / SAG 25.82 / UTEX 2576).